The following is a 176-amino-acid chain: MDSSFTPIEQMLKFRASRHEDFPYQEILLTRLCMHMQSKLLENRNKMLKAQGINETLFMALITLESQENHSIQPSELSCALGSSRTNATRIADELEKRGWIERRESDNDRRCLHLQLTEKGHEFLREVLPPQHNCLHQLWSALSTTEKDQLEQITRKLLSRLDQMEQDGVVLEAMS.

The HTH marR-type domain maps to 26–160 (EILLTRLCMH…LEQITRKLLS (135 aa)).

In terms of biological role, negative regulator of the multidrug operon emrAB. The sequence is that of Transcriptional repressor MprA (mprA) from Escherichia coli O157:H7.